Consider the following 231-residue polypeptide: Thermonuclease (231 aa).

The first 26 residues, Met-1–Ala-26, serve as a signal peptide directing secretion. 2 consecutive propeptides follow at residues Ile-27–Ala-63 and Ser-64–Ser-82. Positions Ala-61–Ser-73 are enriched in polar residues. Positions Ala-61–Thr-86 are disordered. Asp-103 serves as a coordination point for Ca(2+). Arg-117 is a catalytic residue. Residues Asp-122 and Thr-123 each contribute to the Ca(2+) site. Catalysis depends on residues Glu-125 and Arg-169. Over residues His-203–Leu-219 the composition is skewed to basic and acidic residues. The interval His-203–Gln-231 is disordered.

It belongs to the thermonuclease family. Ca(2+) is required as a cofactor.

The protein localises to the secreted. The protein resides in the membrane. It carries out the reaction Endonucleolytic cleavage to nucleoside 3'-phosphates and 3'-phosphooligonucleotide end-products.. Its function is as follows. Enzyme that catalyzes the hydrolysis of both DNA and RNA at the 5' position of the phosphodiester bond. The polypeptide is Thermonuclease (Staphylococcus aureus).